The sequence spans 535 residues: Suppressor of cytokine signaling 6 (535 aa).

Residues 80–89 (RLSAKQKSKG) show a composition bias toward basic residues. The disordered stretch occupies residues 80-105 (RLSAKQKSKGKAGTPSGSSADEDTFS). One can recognise an SH2 domain in the interval 384–491 (WYWGPITRWE…TYPVRLTNPV (108 aa)). The 50-residue stretch at 486 to 535 (RLTNPVSRFMQVRSLQYLCRFVIRQYTRIDLIQKLPLPNKMKDYLQEKHY) folds into the SOCS box domain.

In terms of assembly, interacts with RBCK1. Interacts with phosphorylated IRS4. Interacts with KIT (phosphorylated). Interacts with PIM3.

The protein operates within protein modification; protein ubiquitination. Functionally, SOCS family proteins form part of a classical negative feedback system that regulates cytokine signal transduction. May be a substrate recognition component of a SCF-like ECS (Elongin BC-CUL2/5-SOCS-box protein) E3 ubiquitin-protein ligase complex which mediates the ubiquitination and subsequent proteasomal degradation of target proteins. Regulates KIT degradation by ubiquitination of the tyrosine-phosphorylated receptor. The chain is Suppressor of cytokine signaling 6 (SOCS6) from Pongo abelii (Sumatran orangutan).